The chain runs to 280 residues: MSQFIRHYLLSLQFFTRIPVTGRLANWVGFSPAMLRASAGHFPGVGVLVGALVAAFTALLLFVLPRTGSTPLVAAALGTALGVLLTGAFHEDGLADVFDGLGGSAERERALVIMKDSRVGAFGAIAVMLALLCKVALLALLGAVSATLMVAALFVAHVLSRTWPLLTIRLLPHVGDAAGSKSKPLADQISVAALLTGFIWCFMALALVISTQSATEYIAINLTDTALLQALLSAVVASCVAWAVMARWFWRRLQGFTGDCLGATQQVCELAFYLGLAVGL.

6 consecutive transmembrane segments (helical) span residues 44 to 64, 69 to 89, 111 to 131, 135 to 155, 189 to 209, and 226 to 246; these read GVGVLVGALVAAFTALLLFVL, STPLVAAALGTALGVLLTGAF, LVIMKDSRVGAFGAIAVMLAL, VALLALLGAVSATLMVAALFV, ISVAALLTGFIWCFMALALVI, and ALLQALLSAVVASCVAWAVMA.

This sequence belongs to the CobS family. Mg(2+) serves as cofactor.

The protein resides in the cell inner membrane. It carries out the reaction alpha-ribazole + adenosylcob(III)inamide-GDP = adenosylcob(III)alamin + GMP + H(+). The enzyme catalyses alpha-ribazole 5'-phosphate + adenosylcob(III)inamide-GDP = adenosylcob(III)alamin 5'-phosphate + GMP + H(+). It functions in the pathway cofactor biosynthesis; adenosylcobalamin biosynthesis; adenosylcobalamin from cob(II)yrinate a,c-diamide: step 7/7. In terms of biological role, joins adenosylcobinamide-GDP and alpha-ribazole to generate adenosylcobalamin (Ado-cobalamin). Also synthesizes adenosylcobalamin 5'-phosphate from adenosylcobinamide-GDP and alpha-ribazole 5'-phosphate. This Albidiferax ferrireducens (strain ATCC BAA-621 / DSM 15236 / T118) (Rhodoferax ferrireducens) protein is Adenosylcobinamide-GDP ribazoletransferase.